The chain runs to 403 residues: Dynactin subunit 2-B (403 aa).

The tract at residues 1 to 26 (MADPKYADLPGIARNEPDLYETSDLP) is disordered. Positions 99–132 (PQQKYQRLLHEVQELTQEVEKTQSTLKESATEEK) form a coiled coil. The tract at residues 183 to 206 (AAKTRKDPEGKSSAKGPGPDNENL) is disordered. A compositionally biased stretch (basic and acidic residues) spans 184–194 (AKTRKDPEGKS). Residues 381–401 (KENLATVEDNFSSIDGRIKKL) adopt a coiled-coil conformation.

It belongs to the dynactin subunit 2 family. In terms of assembly, subunit of dynactin, a multiprotein complex part of a tripartite complex with dynein and a adapter, such as BICDL1, BICD2 or HOOK3. The dynactin complex is built around ACTR1A/ACTB filament and consists of an actin-related filament composed of a shoulder domain, a pointed end and a barbed end. Its length is defined by its flexible shoulder domain. The soulder is composed of 2 DCTN1 subunits, 4 DCTN2 and 2 DCTN3.

It localises to the cytoplasm. The protein resides in the cytoskeleton. The protein localises to the microtubule organizing center. It is found in the centrosome. Its subcellular location is the membrane. In terms of biological role, part of the dynactin complex that activates the molecular motor dynein for ultra-processive transport along microtubules. In the dynactin soulder domain, binds the ACTR1A filament and acts as a molecular ruler to determine the length. Modulates cytoplasmic dynein binding to an organelle, and plays a role in prometaphase chromosome alignment and spindle organization during mitosis. Involved in anchoring microtubules to centrosomes. The sequence is that of Dynactin subunit 2-B (dctn2-b) from Xenopus laevis (African clawed frog).